Consider the following 326-residue polypeptide: Delta-aminolevulinic acid dehydratase (326 aa).

Zn(2+)-binding residues include C119, C121, and C129. The Schiff-base intermediate with substrate role is filled by K198. 2 residues coordinate 5-aminolevulinate: R208 and R220. E236 serves as a coordination point for Mg(2+). K251 acts as the Schiff-base intermediate with substrate in catalysis. 5-aminolevulinate is bound by residues S277 and Y316.

It belongs to the ALAD family. In terms of assembly, homooctamer. It depends on Zn(2+) as a cofactor.

The enzyme catalyses 2 5-aminolevulinate = porphobilinogen + 2 H2O + H(+). It functions in the pathway porphyrin-containing compound metabolism; protoporphyrin-IX biosynthesis; coproporphyrinogen-III from 5-aminolevulinate: step 1/4. Catalyzes an early step in the biosynthesis of tetrapyrroles. Binds two molecules of 5-aminolevulinate per subunit, each at a distinct site, and catalyzes their condensation to form porphobilinogen. The chain is Delta-aminolevulinic acid dehydratase (hemB) from Synechococcus elongatus (strain ATCC 33912 / PCC 7942 / FACHB-805) (Anacystis nidulans R2).